The primary structure comprises 91 residues: Cell division topological specificity factor (91 aa).

The protein belongs to the MinE family.

Functionally, prevents the cell division inhibition by proteins MinC and MinD at internal division sites while permitting inhibition at polar sites. This ensures cell division at the proper site by restricting the formation of a division septum at the midpoint of the long axis of the cell. This Gloeobacter violaceus (strain ATCC 29082 / PCC 7421) protein is Cell division topological specificity factor.